We begin with the raw amino-acid sequence, 205 residues long: MNIGITDPLNALVPMVVEQTPKGERSYDIYSRLLKERIIFLTGPVEDNMANLILAQMLFLESENPDKDIFLYINSPGGSVTAGMAIYDTMNFIKPDVSTICVGQAASMGAFLLTAGAKGKRFCLPNSRVMIHQPLGGFQGQASDFEIHAKEILSIKDKLNRLMAEHTGQPLDVISKDTDRDNFMSADQAVDYGIVDSVFKNRASK.

Ser107 functions as the Nucleophile in the catalytic mechanism. Residue His132 is part of the active site.

Belongs to the peptidase S14 family. As to quaternary structure, fourteen ClpP subunits assemble into 2 heptameric rings which stack back to back to give a disk-like structure with a central cavity, resembling the structure of eukaryotic proteasomes.

It is found in the cytoplasm. It carries out the reaction Hydrolysis of proteins to small peptides in the presence of ATP and magnesium. alpha-casein is the usual test substrate. In the absence of ATP, only oligopeptides shorter than five residues are hydrolyzed (such as succinyl-Leu-Tyr-|-NHMec, and Leu-Tyr-Leu-|-Tyr-Trp, in which cleavage of the -Tyr-|-Leu- and -Tyr-|-Trp bonds also occurs).. Cleaves peptides in various proteins in a process that requires ATP hydrolysis. Has a chymotrypsin-like activity. Plays a major role in the degradation of misfolded proteins. The sequence is that of ATP-dependent Clp protease proteolytic subunit from Pseudoalteromonas translucida (strain TAC 125).